The chain runs to 138 residues: Venom allergen 2 (138 aa).

The first 19 residues, 1–19, serve as a signal peptide directing secretion; sequence MKSFVLATCLLGFAQIIYA. 3 disulfides stabilise this stretch: Cys-34-Cys-57, Cys-81-Cys-94, and Cys-101-Cys-122.

It belongs to the ant venom allergen 2/4 family. Homodimer; disulfide-linked. Expressed by the venom gland.

It localises to the secreted. The sequence is that of Venom allergen 2 from Solenopsis invicta (Red imported fire ant).